The chain runs to 167 residues: Phosphopantetheine adenylyltransferase (167 aa).

Position 11 (serine 11) interacts with substrate. ATP contacts are provided by residues 11–12 and histidine 19; that span reads SF. Substrate contacts are provided by lysine 43, threonine 76, and arginine 90. Residues 91–93, glutamate 101, and 126–132 each bind ATP; these read GIR and YDALSST.

It belongs to the bacterial CoaD family. Homohexamer. Mg(2+) is required as a cofactor.

It is found in the cytoplasm. It carries out the reaction (R)-4'-phosphopantetheine + ATP + H(+) = 3'-dephospho-CoA + diphosphate. It participates in cofactor biosynthesis; coenzyme A biosynthesis; CoA from (R)-pantothenate: step 4/5. In terms of biological role, reversibly transfers an adenylyl group from ATP to 4'-phosphopantetheine, yielding dephospho-CoA (dPCoA) and pyrophosphate. The protein is Phosphopantetheine adenylyltransferase of Lacticaseibacillus casei (strain BL23) (Lactobacillus casei).